A 786-amino-acid polypeptide reads, in one-letter code: Cyclin-F (786 aa).

The Nuclear localization signal 1 motif lies at 20 to 28 (KRRIRRRPR). Residues 29–76 (NLTILSLPEDVLFHILKWLSVEDILAVRAVHSQLKDLVDNHASVWACA) form the F-box domain. The Cyclin N-terminal domain maps to 288–405 (QASQAVSKQQ…EIVSALEGKI (118 aa)). 4 short sequence motifs (d box) span residues 310-313 (RYIL), 343-346 (RRRL), 349-352 (RYRL), and 351-354 (RLQL). Disordered stretches follow at residues 564-593 (SPSGRRTKRKRENSLQEDRGSFVTTPTAEL) and 675-738 (TQIP…HTQP). Positions 568 to 574 (RRTKRKR) match the Nuclear localization signal 2 motif. The PEST stretch occupies residues 582–766 (RGSFVTTPTA…ESSVPQQQVK (185 aa)). Low complexity predominate over residues 697–714 (VTTSGYSSVSTASPTSSV). Residues 723-738 (QPTSVLSLDSDSHTQP) show a composition bias toward polar residues. The D box 5 motif lies at 767 to 770 (RINL).

Belongs to the cyclin family. Cyclin AB subfamily. As to quaternary structure, component of the SCF(CCNF) complex consisting of CUL1, RBX1, SKP1 and CCNF. Interacts with SKP1. Interacts with CUL1. Interacts with CCNB1; interaction is required for nuclear localization of CCNB1. Interacts with CCP110; this interaction leads to CCP110 ubiquitination and degradation via the proteasome pathway. Interacts (via the Cyclin N-terminal domain) with MYBL2/BMYB. Interacts with FZR1/CDH1 (via N-terminus). Interacts with RRM2 (via Cy motif and when phosphorylated at 'Thr-33'); the interaction occurs exclusively in G2 and early M. Interacts with CDC6 (via Cy motif); the interaction takes place during G2 and M phase. Degraded when the spindle assembly checkpoint is activated during the G2-M transition. Degradation depends on the C-terminal PEST sequence. In terms of processing, phosphorylated just before cells enter into mitosis. Post-translationally, ubiquitinated by the anaphase-promoting complex (APC/C); leading to its degradation by the proteasome. In terms of tissue distribution, widely expressed, with expression detected in the heart, brain, placenta, lung, liver, skeletal muscle, kidney and pancreas.

The protein resides in the nucleus. The protein localises to the cytoplasm. It is found in the perinuclear region. Its subcellular location is the cytoskeleton. It localises to the microtubule organizing center. The protein resides in the centrosome. The protein localises to the centriole. Substrate recognition component of a SCF (SKP1-CUL1-F-box protein) E3 ubiquitin-protein ligase complex which mediates the ubiquitination and subsequent proteasomal degradation of target proteins. The SCF(CCNF) E3 ubiquitin-protein ligase complex is an integral component of the ubiquitin proteasome system (UPS) and links proteasome degradation to the cell cycle. Mediates the substrate recognition and the proteasomal degradation of various target proteins involved in the regulation of cell cycle progression and in the maintenance of genome stability. Mediates the ubiquitination and proteasomal degradation of CP110 during G2 phase, thereby acting as an inhibitor of centrosome reduplication. In G2, mediates the ubiquitination and subsequent degradation of ribonucleotide reductase RRM2, thereby maintaining a balanced pool of dNTPs and genome integrity. In G2, mediates the ubiquitination and proteasomal degradation of CDC6, thereby suppressing DNA re-replication and preventing genome instability. Involved in the ubiquitination and degradation of the substrate adapter CDH1 of the anaphase-promoting complex (APC/C), thereby acting as an antagonist of APC/C in regulating G1 progression and S phase entry. May play a role in the G2 cell cycle checkpoint control after DNA damage, possibly by promoting the ubiquitination of MYBL2/BMYB. In Homo sapiens (Human), this protein is Cyclin-F (CCNF).